We begin with the raw amino-acid sequence, 308 residues long: MALIEGVGDEVTVLFALVLFFMVLMLAWVSTHTTERAPTHWIRPEPAQGGASSNSQRDFHPGPSQTLTNADPNSETVDSSDSTQSSREFQNAGATPHSEVAFSSSGSTVSTGGSVEYTGAAADSPPDGESHPNFTVSSRDPQAGASSSLRYRGLGDGTTAQSAEEAGTIHLRLKFLNDTERLVTVRLSDTIMYIKRTYFPGQELRVRLIFQGQLLRDDSQTVSSLQLRDGSVLHCHISQHASVPGVGADQANVPLNVGNLLVPLLFLIVMLLWYCQFQYPSLFTGTATACLGGFTLLISAIAFSSYHR.

A helical transmembrane segment spans residues 11–31; sequence VTVLFALVLFFMVLMLAWVST. The interval 39–162 is disordered; it reads THWIRPEPAQ…GLGDGTTAQS (124 aa). Over residues 63–93 the composition is skewed to polar residues; the sequence is PSQTLTNADPNSETVDSSDSTQSSREFQNAG. The segment covering 103 to 115 has biased composition (low complexity); it reads SSSGSTVSTGGSV. Over residues 132–149 the composition is skewed to polar residues; it reads PNFTVSSRDPQAGASSSL. A Ubiquitin-like domain is found at 169 to 242; sequence IHLRLKFLND…LHCHISQHAS (74 aa). The next 2 helical transmembrane spans lie at 253–273 and 283–303; these read VPLN…MLLW and FTGT…AIAF.

It localises to the membrane. Its subcellular location is the cytoplasm. The protein localises to the nucleus. In terms of biological role, may contribute to the regulation of translation during cell-cycle progression. May contribute to the regulation of cell proliferation. The membrane form is involved in sterol-regulated ubiquitination and degradation of HMG-CoA reductase HMGCR. May be involved in centrosome assembly. This is Transmembrane and ubiquitin-like domain-containing protein 1 (tmub1) from Xenopus laevis (African clawed frog).